A 433-amino-acid polypeptide reads, in one-letter code: MDKIPEELEKILQITREQNRWRRLETINLIPSENVMSPLAESVYMSDFMYRYAEGKPFKRYYQGTKYADEIEELAMKLVSEISSSKYADLRAVSGTIANAGVFRVLADSGDKAVIAPVQAGAHVSHTRFGTLGALGIEQIEMPYDQESMNVDVDKAIKLIEEVKPKFVTLGGSLYLFPHPVKELAPHVHAVGAKLVYDSAHVYGLIVGKAWHNPLEEGADVVTASTHKTFPGPQGGLIVTNDDSLYKKVSDTIFPWFVSNHHLHRLPSTAITALEMKYFGKEYAQQIVKNAKALAEALAAEGFKVIGEHLGFTKSHQVAIDVRNLGGGAKVAKLFEEANIIANKNLLPYDPPSAVKDPSGVRLGVQEMTRFGMKEEEMRIIARLMREVAIENKDVKEVKKKVTEFRKEFLEVKYTFTNVDLAKYSSKVISLLI.

Residue Ala-122–Val-124 participates in (6S)-5,6,7,8-tetrahydrofolate binding. Position 228 is an N6-(pyridoxal phosphate)lysine (Lys-228).

It belongs to the SHMT family. As to quaternary structure, homodimer. The cofactor is pyridoxal 5'-phosphate.

It is found in the cytoplasm. It functions in the pathway amino-acid biosynthesis; glycine biosynthesis; glycine from L-serine: step 1/1. Its function is as follows. Catalyzes the reversible interconversion of serine and glycine with a modified folate serving as the one-carbon carrier. Also exhibits a pteridine-independent aldolase activity toward beta-hydroxyamino acids, producing glycine and aldehydes, via a retro-aldol mechanism. This chain is Serine hydroxymethyltransferase, found in Sulfolobus acidocaldarius (strain ATCC 33909 / DSM 639 / JCM 8929 / NBRC 15157 / NCIMB 11770).